A 514-amino-acid polypeptide reads, in one-letter code: MTLIWRHLLRPLCLVTSAPRILEMHPFLSLGTSRTSVTKLSLHTKPRMPPCDFMPERYQSLGYNRVLEIHKEHLSPVVTAYFQKPLLLHQGHMEWLFDAEGSRYLDFFSGIVTVSVGHCHPKVNAVAQKQLGRLWHTSTVFFHPPMHEYAEKLAALLPEPLKVIFLVNSGSEANELAMLMARAHSNNIDIISFRGAYHGCSPYTLGLTNVGTYKMELPGGTGCQPTMCPDVFRGPWGGSHCRDSPVQTIRKCSCAPDCCQAKDQYIEQFKDTLSTSVAKSIAGFFAEPIQGVNGVVQYPKGFLKEAFELVRARGGVCIADEVQTGFGRLGSHFWGFQTHDVLPDIVTMAKGIGNGFPMAAVITTPEIAKSLAKCLQHFNTFGGNPMACAIGSAVLEVIKEENLQENSQEVGTYMLLKFAKLRDEFEIVGDVRGKGLMIGIEMVQDKISCRPLPREEVNQIHEDCKHMGLLVGRGSIFSQTFRIAPSMCITKPEVDFAVEVFRSALTQHMERRAK.

The transit peptide at 1-41 (MTLIWRHLLRPLCLVTSAPRILEMHPFLSLGTSRTSVTKLS) directs the protein to the mitochondrion. An N6-acetyllysine; alternate modification is found at lysine 71. Lysine 71 carries the N6-succinyllysine; alternate modification. Lysine 84 carries the post-translational modification N6-acetyllysine. Position 262 is an N6-acetyllysine; alternate (lysine 262). At lysine 262 the chain carries N6-succinyllysine; alternate. Lysine 304 carries the post-translational modification N6-succinyllysine. Lysine 350 carries the post-translational modification N6-(pyridoxal phosphate)lysine. N6-acetyllysine; alternate is present on residues lysine 417 and lysine 420. Residues lysine 417 and lysine 420 each carry the N6-succinyllysine; alternate modification.

It belongs to the class-III pyridoxal-phosphate-dependent aminotransferase family. In terms of assembly, homotetramer. It depends on pyridoxal 5'-phosphate as a cofactor. As to expression, expressed in the convoluted tubule in the kidney and in the liver hepatocytes (at protein level).

It is found in the mitochondrion. It catalyses the reaction glyoxylate + L-alanine = glycine + pyruvate. The catalysed reaction is (R)-3-amino-2-methylpropanoate + pyruvate = 2-methyl-3-oxopropanoate + L-alanine. It carries out the reaction 3-oxopropanoate + L-alanine = beta-alanine + pyruvate. The enzyme catalyses 2-oxobutanoate + L-alanine = (2S)-2-aminobutanoate + pyruvate. It catalyses the reaction N(omega),N(omega)-dimethyl-L-arginine + pyruvate = 5-(3,3-dimethylguanidino)-2-oxopentanoate + L-alanine. The catalysed reaction is N(omega),N('omega)-dimethyl-L-arginine + pyruvate = 5-(3,3'-dimethylguanidino)-2-oxopentanoate + L-alanine. It carries out the reaction N(omega),N(omega)-dimethyl-L-arginine + glyoxylate = 5-(3,3-dimethylguanidino)-2-oxopentanoate + glycine. The enzyme catalyses N(omega),N('omega)-dimethyl-L-arginine + glyoxylate = 5-(3,3'-dimethylguanidino)-2-oxopentanoate + glycine. It catalyses the reaction N(omega)-methyl-L-arginine + pyruvate = 5-(3-methylguanidino)-2-oxopentanoate + L-alanine. The catalysed reaction is N(omega)-methyl-L-arginine + glyoxylate = 5-(3-methylguanidino)-2-oxopentanoate + glycine. It carries out the reaction L-ornithine + pyruvate = 5-amino-2-oxopentanoate + L-alanine. The enzyme catalyses L-ornithine + glyoxylate = 5-amino-2-oxopentanoate + glycine. It catalyses the reaction (2S)-2-aminobutanoate + glyoxylate = 2-oxobutanoate + glycine. The catalysed reaction is N(omega),N(omega)-dimethyl-L-arginine + oxaloacetate = 5-(3,3-dimethylguanidino)-2-oxopentanoate + L-aspartate. It carries out the reaction oxaloacetate + L-alanine = L-aspartate + pyruvate. The enzyme catalyses N(omega),N(omega)-dimethyl-L-arginine + 2-oxobutanoate = 5-(3,3-dimethylguanidino)-2-oxopentanoate + (2S)-2-aminobutanoate. It catalyses the reaction 2-oxopentanoate + N(omega),N(omega)-dimethyl-L-arginine = 5-(3,3-dimethylguanidino)-2-oxopentanoate + L-2-aminopentanoate. The catalysed reaction is 2-oxohexanoate + N(omega),N(omega)-dimethyl-L-arginine = L-2-aminohexanoate + 5-(3,3-dimethylguanidino)-2-oxopentanoate. In terms of biological role, multifunctional aminotransferase with a broad substrate specificity. Catalyzes the conversion of glyoxylate to glycine using alanine as the amino donor. Catalyzes metabolism of not L- but the D-isomer of D-beta-aminoisobutyric acid to generate 2-methyl-3-oxopropanoate and alanine. Catalyzes the transfer of the amino group from beta-alanine to pyruvate to yield L-alanine and 3-oxopropanoate. Can metabolize NG-monomethyl-L-arginine (NMMA), asymmetric NG,NG-dimethyl-L-arginine (ADMA) and symmetric NG,N'G-dimethyl-L-arginine (SDMA). ADMA is a potent inhibitor of nitric-oxide (NO) synthase, and this activity provides mechanism through which the kidney regulates blood pressure. The polypeptide is Alanine--glyoxylate aminotransferase 2, mitochondrial (AGXT2) (Homo sapiens (Human)).